A 357-amino-acid polypeptide reads, in one-letter code: UPF0283 membrane protein BCAN_A1047 (357 aa).

Residues 1 to 36 form a disordered region; sequence MSDKTPRKPTAFRLEQPARVSAASEQEEPRRPRAVK. Basic and acidic residues predominate over residues 27 to 36; that stretch reads EEPRRPRAVK. A run of 2 helical transmembrane segments spans residues 78–98 and 109–129; these read ILFG…TEDL and LGWT…AIIL.

It belongs to the UPF0283 family.

Its subcellular location is the cell inner membrane. The protein is UPF0283 membrane protein BCAN_A1047 of Brucella canis (strain ATCC 23365 / NCTC 10854 / RM-666).